Here is a 349-residue protein sequence, read N- to C-terminus: MSLLLPKLALTLGDPAGIGPEIVLKALADPQVQACAQITVVGERQVLEATYCLLRQRGATDLADPAGIPVLEGGSGFYLEPSRVGRGDVASGAASFAYLKTAIEEALRGQFQGIVTAPIAKYLWHQAGYPFPGQTEVLAQLSGSERYGMLFVARSPHSGWQIRVLLATTHIPLSQVPLTLTPELVRAKLDLLVGSLRKLFGIVNPVIAVAGLNPHAGEQGQLGQEEKTWLAELLRTYPHAKIWGPLPPDTMWLAPAQAWYGQGAPAVADAYLALYHDQGLIPVKLLAFDRAVNLTLGLPFIRTSPDHGTAFDLAGQGVARAESLKQAILLAAELALSSAAASRSLQAQR.

Threonine 135 provides a ligand contact to substrate. Residues histidine 170, histidine 215, and histidine 276 each contribute to the a divalent metal cation site. The substrate site is built by lysine 284, asparagine 293, and arginine 302.

The protein belongs to the PdxA family. As to quaternary structure, homodimer. A divalent metal cation serves as cofactor.

It localises to the cytoplasm. It carries out the reaction 4-(phosphooxy)-L-threonine + NAD(+) = 3-amino-2-oxopropyl phosphate + CO2 + NADH. It functions in the pathway cofactor biosynthesis; pyridoxine 5'-phosphate biosynthesis; pyridoxine 5'-phosphate from D-erythrose 4-phosphate: step 4/5. Functionally, catalyzes the NAD(P)-dependent oxidation of 4-(phosphooxy)-L-threonine (HTP) into 2-amino-3-oxo-4-(phosphooxy)butyric acid which spontaneously decarboxylates to form 3-amino-2-oxopropyl phosphate (AHAP). This chain is 4-hydroxythreonine-4-phosphate dehydrogenase, found in Synechococcus sp. (strain JA-3-3Ab) (Cyanobacteria bacterium Yellowstone A-Prime).